We begin with the raw amino-acid sequence, 436 residues long: Exodeoxyribonuclease 7 large subunit (436 aa).

Residues 412 to 436 (PGGVMNKNSNTTDSTDNTENGTGEA) form a disordered region. The segment covering 417-436 (NKNSNTTDSTDNTENGTGEA) has biased composition (low complexity).

It belongs to the XseA family. Heterooligomer composed of large and small subunits.

The protein resides in the cytoplasm. It catalyses the reaction Exonucleolytic cleavage in either 5'- to 3'- or 3'- to 5'-direction to yield nucleoside 5'-phosphates.. Its function is as follows. Bidirectionally degrades single-stranded DNA into large acid-insoluble oligonucleotides, which are then degraded further into small acid-soluble oligonucleotides. This chain is Exodeoxyribonuclease 7 large subunit, found in Corynebacterium jeikeium (strain K411).